We begin with the raw amino-acid sequence, 494 residues long: Hexokinase-2 (494 aa).

The 452-residue stretch at 32 to 483 (GRADAVLREL…SGIGAALLAA (452 aa)) folds into the Hexokinase domain. The hexokinase small subdomain stretch occupies residues 87–225 (SGEEKGVFYA…GLDMKVTALI (139 aa)). Residues Gly101, Thr102, and Asn103 each coordinate ADP. Positions 191, 192, 226, and 227 each coordinate D-glucose. Residues 226–472 (NDTIGTLAGG…STIVIKLAKD (247 aa)) form a hexokinase large subdomain region. An ADP-binding site is contributed by Thr250. D-glucose is bound by residues Asn253, Glu281, and Glu312. Gly437 is an ADP binding site.

The protein belongs to the hexokinase family. In terms of tissue distribution, expressed in roots, leaves, flowers, immature seeds, endosperm and seed coat.

It catalyses the reaction a D-hexose + ATP = a D-hexose 6-phosphate + ADP + H(+). It carries out the reaction D-fructose + ATP = D-fructose 6-phosphate + ADP + H(+). The catalysed reaction is D-glucose + ATP = D-glucose 6-phosphate + ADP + H(+). It participates in carbohydrate metabolism; hexose metabolism. Its pathway is carbohydrate degradation; glycolysis; D-glyceraldehyde 3-phosphate and glycerone phosphate from D-glucose: step 1/4. Functionally, fructose and glucose phosphorylating enzyme. In Oryza sativa subsp. japonica (Rice), this protein is Hexokinase-2 (HXK2).